A 154-amino-acid polypeptide reads, in one-letter code: Spermatogenesis-associated protein 19, mitochondrial (154 aa).

A mitochondrion-targeting transit peptide spans 1-24 (MIITTWIMYIFARKTVGLPFPPRV). Phosphoserine is present on residues serine 26 and serine 116.

In terms of tissue distribution, expressed specifically in adult testis (at protein level).

The protein resides in the mitochondrion outer membrane. The protein localises to the mitochondrion. Its subcellular location is the cell projection. It is found in the cilium. It localises to the flagellum. Functionally, essential for sperm motility and male fertility. Plays an important role in sperm motility by regulating the organization and function of the mitochondria and is also required for correct sperm midpiece assembly. This chain is Spermatogenesis-associated protein 19, mitochondrial (Spata19), found in Mus musculus (Mouse).